Consider the following 230-residue polypeptide: MPNTSSSQSFTIFVDGWLIRHRYFVEQLMCASSLDETNRISLEEQQSLVAQFLSHCLQYYQEKFASVSLAGDNVFTFFCPPWFNSYAKLILWVGDFKPSLVFKLTEVSVADLTRHQKDRISSLKSETRRKEREVMRDFALVQQSVADPPVMLAARRVGAVGMVDGEETDLEEAMEVLKAGMAAAMNNADQLRCSTVGKVVEILTPPQAIKVLRTIGQLHLRLRDRDQERA.

The 224-residue stretch at 7–230 (SQSFTIFVDG…RLRDRDQERA (224 aa)) folds into the DOG1 domain.

In terms of biological role, negative regulator of salt (NaCl) tolerance probably by enhancing abscisic acid (ABA) sensitivity. The sequence is that of Protein RESPONSE TO ABA AND SALT 1 from Arabidopsis thaliana (Mouse-ear cress).